The chain runs to 471 residues: ATP synthase subunit beta 2 (471 aa).

Gly157 to Thr164 is a binding site for ATP.

This sequence belongs to the ATPase alpha/beta chains family. In terms of assembly, F-type ATPases have 2 components, CF(1) - the catalytic core - and CF(0) - the membrane proton channel. CF(1) has five subunits: alpha(3), beta(3), gamma(1), delta(1), epsilon(1). CF(0) has three main subunits: a(1), b(2) and c(9-12). The alpha and beta chains form an alternating ring which encloses part of the gamma chain. CF(1) is attached to CF(0) by a central stalk formed by the gamma and epsilon chains, while a peripheral stalk is formed by the delta and b chains.

The protein localises to the cell inner membrane. The enzyme catalyses ATP + H2O + 4 H(+)(in) = ADP + phosphate + 5 H(+)(out). Functionally, produces ATP from ADP in the presence of a proton gradient across the membrane. The catalytic sites are hosted primarily by the beta subunits. This chain is ATP synthase subunit beta 2, found in Pelobacter propionicus (strain DSM 2379 / NBRC 103807 / OttBd1).